Here is a 524-residue protein sequence, read N- to C-terminus: Beta-glucosidase 23 (524 aa).

Positions 1-24 (MVLQKLPLIGLLLLLTIVASPANA) are cleaved as a signal peptide. A beta-D-glucoside is bound at residue Gln54. A glycan (N-linked (GlcNAc...) asparagine) is linked at Asn60. A beta-D-glucoside contacts are provided by residues His157 and 202-203 (NE). The active-site Proton donor is the Glu203. Cys222 and Cys230 are disulfide-bonded. A beta-D-glucoside contacts are provided by Tyr346 and Glu418. Residue Glu418 is the Nucleophile of the active site. The N-linked (GlcNAc...) asparagine glycan is linked to Asn461. A beta-D-glucoside-binding positions include Trp468, 475–476 (EW), and Phe484. Residue Asn494 is glycosylated (N-linked (GlcNAc...) asparagine). Residues 521–524 (KDEL) carry the Prevents secretion from ER motif.

It belongs to the glycosyl hydrolase 1 family. Homodimers. Binds to the deubiquitinating enzyme AMSH3. The inactive form interacts with PBP1/JAL30 to form the PYK10 complex, at least composed of PYK10/BGLU23, BGLU21, BGLU22, JAL22, JAL23, PBP1/JAL30, PBP2/JAL31, JAL32, JAL33, JAL34, JAL35, GLL22 and GLL23. Post-translationally, forms interchain disulfide bonds. In terms of tissue distribution, expressed exclusively in roots.

It is found in the endoplasmic reticulum lumen. It carries out the reaction Hydrolysis of terminal, non-reducing beta-D-glucosyl residues with release of beta-D-glucose.. Its activity is regulated as follows. Activated by tissue damage and upon binding to PBP1 or PBP2. Beta-D-glucosidase active on scopolin &gt; esculin &gt;&gt; 4-MU-glucoside &gt;&gt; DIMBOA-glucoside. No activity with pNP-glucoside, oNP-glucoside and sinigrin as substrates. May possess beta-D-fucosidase activity. Required for the beneficial interaction with the endophytic fungus P.indica. May participate in the control of root colonization by P.indica by repressing defense responses and modulating other responses required for a mutualistic interaction. The chain is Beta-glucosidase 23 from Arabidopsis thaliana (Mouse-ear cress).